A 1017-amino-acid chain; its full sequence is MSSPFPADTPSSNRPSNSSPPPSSIGAGFGSSSGLDSQIGSRLHFPSSSQPHVSNSQTGPFVNDSTQFSSQRLQTDGSATNDMEGNEPARSFKSRALNHVKKVDDVTGEKVREAFEQFLEDFSVQSTDTGEVEKVYRAQIEFMKIYDLNTIYIDYQHLSMRENGALAMAISEQYYRFLPFLQKGLRRVVRKYAPELLNTSDSLKRSEGDEGQADEDEQQDDDMNGSSLPRDSGSSAAPGNGTSAMATRSITTSTSPEQTERVFQISFFNLPTVHRIRDIRSEKIGSLLSISGTVTRTSEVRPELYKASFTCDMCRAIVDNVEQSFKYTEPTFCPNPSCENRAFWTLNVTRSRFLDWQKVRIQENANEIPTGSMPRTLDVILRGDSVERAKPGDRCKFTGVEIVVPDVTQLGLPGVKPSSTLDTRGISKTTEGLNSGVTGLRSLGVRDLTYKISFLACHVISIGSNIGASSPDANSNNRETELQMAANLQANNVYQDNERDQEVFLNSLSSDEINELKEMVKDEHIYDKLVRSIAPAVFGHEAVKKGILLQMLGGVHKSTVEGIKLRGDINICVVGDPSTSKSQFLKYVVGFAPRSVYTSGKASSAAGLTAAVVRDEEGGDYTIEAGALMLADNGICCIDEFDKMDISDQVAIHEAMEQQTISIAKAGIHATLNARTSILAAANPVGGRYNRKLSLRGNLNMTAPIMSRFDLFFVILDDCNEKIDTELASHIVDLHMKRDEAIEPPFSAEQLRRYIKYARTFKPILTKEARSYLVEKYKELRKDDAQGFSRSSYRITVRQLESMIRLSEAIARANCVDEITPSFIAEAYDLLRQSIIRVDVDDVEMDEEFDNIESQSHAASGNNDDNDDGTGSGVITSEPPADIEEGQSEATARPGTSEKKKTTVTYDKYVSMMNMIVRKIAEVDREGAEELTAVDIVDWYLLQKENDLGSLAEYWEERRLAFKVIKRLVKDRILMEIHGTRHNLRDLENEENENNKTVYVIHPNCEVLDQLEPQDSS.

Disordered regions lie at residues 1 to 94 (MSSP…SFKS) and 200 to 257 (SDSL…TSPE). Residues 24–34 (SIGAGFGSSSG) show a composition bias toward low complexity. Residues 35–83 (LDSQIGSRLHFPSSSQPHVSNSQTGPFVNDSTQFSSQRLQTDGSATNDM) show a composition bias toward polar residues. Position 78 is a phosphoserine (serine 78). Residues 209–223 (DEGQADEDEQQDDDM) show a composition bias toward acidic residues. The span at 224–257 (NGSSLPRDSGSSAAPGNGTSAMATRSITTSTSPE) shows a compositional bias: polar residues. Serine 249 and serine 372 each carry phosphoserine. Residues 525-732 (IYDKLVRSIA…IDTELASHIV (208 aa)) enclose the MCM domain. 575 to 582 (GDPSTSKS) is an ATP binding site. The short motif at 707–710 (SRFD) is the Arginine finger element. Phosphothreonine is present on threonine 766. The tract at residues 852 to 901 (IESQSHAASGNNDDNDDGTGSGVITSEPPADIEEGQSEATARPGTSEKKK) is disordered.

This sequence belongs to the MCM family. As to quaternary structure, component of the MCM2-7 complex. The complex forms a toroidal hexameric ring with the proposed subunit order MCM2-MCM6-MCM4-MCM7-MCM3-MCM5; loaded onto DNA, forms a head-head double hexamer. Interacts with MCM10.

The protein resides in the nucleus. The enzyme catalyses ATP + H2O = ADP + phosphate + H(+). Its function is as follows. Acts as a component of the MCM2-7 complex (MCM complex) which is the putative replicative helicase essential for 'once per cell cycle' DNA replication initiation and elongation in eukaryotic cells. The active ATPase sites in the MCM2-7 ring are formed through the interaction surfaces of two neighboring subunits such that a critical structure of a conserved arginine finger motif is provided in trans relative to the ATP-binding site of the Walker A box of the adjacent subunit. The six ATPase active sites, however, are likely to contribute differentially to the complex helicase activity. Once loaded onto DNA, double hexamers can slide on dsDNA in the absence of ATPase activity. Required for the entry in S phase and for cell division. The protein is DNA replication licensing factor MCM6 (MCM6) of Saccharomyces cerevisiae (strain ATCC 204508 / S288c) (Baker's yeast).